The following is a 208-amino-acid chain: Large ribosomal subunit protein uL4 (208 aa).

A disordered region spans residues Arg-44–Ile-89. Residues Gly-60–Gly-71 show a composition bias toward basic residues.

This sequence belongs to the universal ribosomal protein uL4 family. As to quaternary structure, part of the 50S ribosomal subunit.

In terms of biological role, one of the primary rRNA binding proteins, this protein initially binds near the 5'-end of the 23S rRNA. It is important during the early stages of 50S assembly. It makes multiple contacts with different domains of the 23S rRNA in the assembled 50S subunit and ribosome. Functionally, forms part of the polypeptide exit tunnel. This chain is Large ribosomal subunit protein uL4, found in Chlorobium phaeobacteroides (strain BS1).